A 389-amino-acid polypeptide reads, in one-letter code: Acyl-[acyl-carrier-protein] dehydrogenase MbtN (389 aa).

This sequence belongs to the acyl-CoA dehydrogenase family. FAD serves as cofactor.

It participates in siderophore biosynthesis; mycobactin biosynthesis. Catalyzes the dehydrogenation at the alpha-beta position of ACP-bound acyl chains. This results in the introduction of a double bond in the lipidic chain, which is further transferred to the epsilon-amino group of lysine residue in the mycobactin core by MbtK. This chain is Acyl-[acyl-carrier-protein] dehydrogenase MbtN (mbtN), found in Mycobacterium sp. (strain MCS).